The chain runs to 4760 residues: Nonribosomal peptide synthetase cm3A (4760 aa).

The span at 1–12 (MKHLASSENMPT) shows a compositional bias: polar residues. The segment at 1 to 24 (MKHLASSENMPTPAQDRAPSPSAM) is disordered. The Carrier 1 domain maps to 19-95 (PSPSAMQQEI…ELSRSAECQL (77 aa)). S56 bears the O-(pantetheine 4'-phosphoryl)serine mark. Condensation regions lie at residues 142–570 (QDIF…EIEQ) and 178–571 (PGLS…IEQL). The interval 591–984 (DEQARLCPDA…GRRDTQVKLR (394 aa)) is adenylation 1. The 78-residue stretch at 1120–1197 (REATTLQLQI…KLTEKLGVPE (78 aa)) folds into the Carrier 2 domain. O-(pantetheine 4'-phosphoryl)serine is present on S1158. 2 condensation regions span residues 1210 to 1654 (FPLS…KTPS) and 1689 to 2125 (VEDM…NVTT). Residues 2171 to 2551 (DGDLTYFELD…DRKDWQIKIR (381 aa)) are adenylation 2. Residues 2684 to 2762 (LPSSETEKTV…ELAHAIDQRS (79 aa)) form the Carrier 3 domain. S2721 bears the O-(pantetheine 4'-phosphoryl)serine mark. The interval 2811-3203 (VEDIYPCTPL…RFKHIFGQLS (393 aa)) is condensation 4. An adenylation 3 region spans residues 3255–3647 (SATTPDRPAV…GRADQQLKIR (393 aa)). The 75-residue stretch at 3783–3857 (TRTEELMQSV…QLAQRATTDA (75 aa)) folds into the Carrier 4 domain. 2 condensation regions span residues 3869-4296 (EFRL…TLLC) and 4340-4757 (EDIY…EEMG).

This sequence belongs to the nrps family.

It functions in the pathway secondary metabolite biosynthesis. Functionally, nonribosomal peptide synthetase; part of the gene cluster that mediates the biosynthesis of beauveriolides I and III, cyclodepsipeptides acting as inhibitors of the acyl-CoA:cholesterol acyltransferase. The HR-PKS cm3B initiates the biosynthesis of beauveriolides by iteratively catalyzing the formation of the linear polyketide chain. The ATP-dependent acetyl-CoA ligase cm3D converts the polyketide carboxylic acid to a CoA thioester which id shuttled to the first T domain in the NRPS cm3A by the acetyltransferase cm3C. Cm3A contains 13 domains and assembles the polyketide chain, L-phenylalanine, L-alanine, and D-leucine (or D-allo-isoleucine) to form beauveriolide I (or beauveriolide III). The production of both beauveriolides I and III suggests the substrate adaptability of cm3B, using different amino acids as substrates. The polypeptide is Nonribosomal peptide synthetase cm3A (Cordyceps militaris (strain CM01) (Caterpillar fungus)).